Reading from the N-terminus, the 117-residue chain is Protein Turandot F (117 aa).

Residues 1 to 22 form the signal peptide; sequence MKTVILFSFLLVLLGYLGAGHA.

This sequence belongs to the Turandot family.

The protein localises to the secreted. Functionally, a humoral factor that may play a role in stress tolerance. The protein is Protein Turandot F of Drosophila sechellia (Fruit fly).